A 265-amino-acid polypeptide reads, in one-letter code: Undecaprenyl-diphosphatase 1 (265 aa).

7 consecutive transmembrane segments (helical) span residues 4–24 (IITAFILGIVEGLAEFLPISS), 42–62 (AKTFEIVIQLGAILAIAILYH), 84–104 (FHVFLGVFPAVVAGLLLHDVI), 108–128 (LFQPYTVVIGLVAGAILMIFA), 184–204 (SEFSFLIALPVMVGATGLDLL), 217–237 (MFAVGFITSFIVAMLAVVTFL), and 245–265 (LKPFAYYRILLAILFTVFVLL).

Belongs to the UppP family.

Its subcellular location is the cell membrane. It catalyses the reaction di-trans,octa-cis-undecaprenyl diphosphate + H2O = di-trans,octa-cis-undecaprenyl phosphate + phosphate + H(+). Functionally, catalyzes the dephosphorylation of undecaprenyl diphosphate (UPP). Confers resistance to bacitracin. In Bacillus anthracis, this protein is Undecaprenyl-diphosphatase 1.